Reading from the N-terminus, the 302-residue chain is Sulfate adenylyltransferase subunit 2 (302 aa).

Belongs to the PAPS reductase family. CysD subfamily. In terms of assembly, heterodimer composed of CysD, the smaller subunit, and CysN.

It catalyses the reaction sulfate + ATP + H(+) = adenosine 5'-phosphosulfate + diphosphate. The protein operates within sulfur metabolism; hydrogen sulfide biosynthesis; sulfite from sulfate: step 1/3. Functionally, with CysN forms the ATP sulfurylase (ATPS) that catalyzes the adenylation of sulfate producing adenosine 5'-phosphosulfate (APS) and diphosphate, the first enzymatic step in sulfur assimilation pathway. APS synthesis involves the formation of a high-energy phosphoric-sulfuric acid anhydride bond driven by GTP hydrolysis by CysN coupled to ATP hydrolysis by CysD. This Xanthomonas oryzae pv. oryzae (strain MAFF 311018) protein is Sulfate adenylyltransferase subunit 2.